A 436-amino-acid polypeptide reads, in one-letter code: Protein translocase subunit SecY (436 aa).

Helical transmembrane passes span 17–37 (ILLT…PVPY), 72–92 (FGLL…IQLL), 122–142 (TFFW…EVIF), 146–166 (LQVY…VLWF), 209–229 (FSNI…CIYI), 269–289 (VMPL…FEII), 309–329 (ISYW…IFFF), and 380–400 (IFLI…NLNI).

The protein belongs to the SecY/SEC61-alpha family. Component of the plastid Sec protein translocase complex, which is composed of at least SecY and SecE.

It localises to the plastid. The protein localises to the chloroplast thylakoid membrane. Functionally, the central subunit of the protein translocation channel SecYE. Consists of two halves. These two domains form a lateral gate at the front which open onto the bilayer between TMs 2 and 7, and are clamped together by SecE at the back. The channel is closed by both a pore ring composed of hydrophobic SecY resides and a short helix (helix 2A) on the extracellular side of the membrane which forms a plug. This is Protein translocase subunit SecY from Vaucheria litorea (Yellow-green alga).